A 381-amino-acid polypeptide reads, in one-letter code: S-adenosylmethionine synthase (381 aa).

His-15 is an ATP binding site. Asp-17 provides a ligand contact to Mg(2+). Position 43 (Glu-43) interacts with K(+). Residues Glu-56 and Gln-99 each coordinate L-methionine. A flexible loop region spans residues 99–109 (QSPDINQGVDR). Residues 164-166 (DAK), 230-231 (RF), Asp-239, 245-246 (RK), Ala-262, and Lys-266 contribute to the ATP site. Asp-239 serves as a coordination point for L-methionine. Lys-270 is a binding site for L-methionine.

It belongs to the AdoMet synthase family. As to quaternary structure, homotetramer; dimer of dimers. Requires Mg(2+) as cofactor. K(+) is required as a cofactor.

Its subcellular location is the cytoplasm. It catalyses the reaction L-methionine + ATP + H2O = S-adenosyl-L-methionine + phosphate + diphosphate. It participates in amino-acid biosynthesis; S-adenosyl-L-methionine biosynthesis; S-adenosyl-L-methionine from L-methionine: step 1/1. In terms of biological role, catalyzes the formation of S-adenosylmethionine (AdoMet) from methionine and ATP. The overall synthetic reaction is composed of two sequential steps, AdoMet formation and the subsequent tripolyphosphate hydrolysis which occurs prior to release of AdoMet from the enzyme. The sequence is that of S-adenosylmethionine synthase from Alteromonas mediterranea (strain DSM 17117 / CIP 110805 / LMG 28347 / Deep ecotype).